A 348-amino-acid chain; its full sequence is Rhodopsin (348 aa).

Residue M1 is modified to N-acetylmethionine. At 1-36 (MNGTEGPNFYVPFSNATGVVRSPFEYPQYYLAEPWQ) the chain is on the extracellular side. N-linked (GlcNAc...) asparagine glycans are attached at residues N2 and N15. Residues 37–61 (FSMLAAYMFMLIVLGFPINFLTLYV) form a helical membrane-spanning segment. The Cytoplasmic segment spans residues 62 to 73 (TVQHKKLRTPLN). The helical transmembrane segment at 74–96 (YILLNLAVADLFMVFGGFTTTLY) threads the bilayer. The Extracellular portion of the chain corresponds to 97-110 (TSLHGYFVFGPTGC). A disulfide bridge connects residues C110 and C187. The chain crosses the membrane as a helical span at residues 111 to 133 (NLEGFFATLGGEIALWSLVVLAI). The 'Ionic lock' involved in activated form stabilization signature appears at 134-136 (ERY). Topologically, residues 134-152 (ERYVVVCKPMSNFRFGENH) are cytoplasmic. A helical membrane pass occupies residues 153–173 (AIMGLVFTWIMALACAAPPLV). The Extracellular portion of the chain corresponds to 174-202 (GWSRYIPEGMQCSCGIDYYTLKPEVNNES). Residue E201 participates in Zn(2+) binding. A helical transmembrane segment spans residues 203 to 224 (FVIYMFVVHFFIPLFVIFFCYG). The Cytoplasmic portion of the chain corresponds to 225 to 252 (QLVFTVKEAAAQQQESATTQKAEKEVTR). The chain crosses the membrane as a helical span at residues 253–274 (MVIIMVIAFLICWLPYAGVAFY). The Extracellular portion of the chain corresponds to 275–286 (IFTHQGSNFGPI). Position 279 (Q279) interacts with Zn(2+). The helical transmembrane segment at 287-308 (FMTLPAFFAKTASIYNPVIYIM) threads the bilayer. K296 is subject to N6-(retinylidene)lysine. Over 309 to 348 (MNKQFRTCMITTLCCGKNPLGDDEASTTASKTETSQVAPA) the chain is Cytoplasmic. Residues C322 and C323 are each lipidated (S-palmitoyl cysteine). Positions 330 to 348 (DDEASTTASKTETSQVAPA) are interaction with SAG. Phosphoserine is present on S334. Phosphothreonine is present on residues T335 and T336. S338 is subject to Phosphoserine. Phosphothreonine is present on residues T340 and T342. The residue at position 343 (S343) is a Phosphoserine.

Belongs to the G-protein coupled receptor 1 family. Opsin subfamily. Homodimer. May form a complex composed of RHO, GRK1 and RCVRN in a Ca(2+)-dependent manner; RCVRN prevents the interaction between GRK1 and RHO. Interacts with GRK1. Interacts (phosphorylated form) with SAG. Interacts with GNAT1. Interacts with GNAT3. SAG and G-proteins compete for a common binding site. Interacts with PRCD; the interaction promotes PRCD stability. Forms a complex with ASAP1 and ARF4. Forms a complex with ASAP1, RAB11A, Rabin8/RAB3IP, ARF4 and RAB11FIP3; the complex regulates Golgi-to-cilia rhodopsin/RHO transport in photoreceptors. Post-translationally, phosphorylated on some or all of the serine and threonine residues present in the C-terminal region. In terms of processing, contains one covalently linked retinal chromophore. Upon light absorption, the covalently bound 11-cis-retinal is converted to all-trans-retinal. After hydrolysis of the Schiff base and release of the covalently bound all-trans-retinal, active rhodopsin is regenerated by binding of a fresh molecule of 11-cis-retinal.

It localises to the membrane. It is found in the cell projection. The protein localises to the cilium. Its subcellular location is the photoreceptor outer segment. Functionally, photoreceptor required for image-forming vision at low light intensity. Required for photoreceptor cell viability after birth. Light-induced isomerization of 11-cis to all-trans retinal triggers a conformational change that activates signaling via G-proteins. Subsequent receptor phosphorylation mediates displacement of the bound G-protein alpha subunit by the arrestin SAG and terminates signaling. The chain is Rhodopsin (RHO) from Otolemur crassicaudatus (Brown greater galago).